The chain runs to 448 residues: Nuclear distribution protein PAC1 (448 aa).

In terms of domain architecture, LisH spans 9 to 41 (QAEELHKSIIAYLAANNFQDSVTAMRTELNLGE). Positions 74-95 (SATPTSLSNRKQDPASWLPAGP) are disordered. WD repeat units follow at residues 102-143 (SHRT…RTVK), 145-185 (HTKA…KNIR), 189-236 (GHDH…CLKT), 239-278 (GHSD…PETK), 283-343 (GHEH…IKTL), 345-384 (GHDN…KCVK), and 389-444 (MHEH…TSLR).

Belongs to the WD repeat LIS1/nudF family. In terms of assembly, self-associates. Interacts with NDL1 and dynein.

Its subcellular location is the cytoplasm. It localises to the cytoskeleton. The protein resides in the spindle pole. Its function is as follows. Positively regulates the activity of the minus-end directed microtubule motor protein dynein. May enhance dynein-mediated microtubule sliding by targeting dynein to the microtubule plus end. Required for nuclear migration during vegetative growth as well as development. Required for retrograde early endosome (EE) transport from the hyphal tip. Required for localization of dynein to the mitotic spindle poles. Recruits additional proteins to the dynein complex at SPBs. This Fusarium vanettenii (strain ATCC MYA-4622 / CBS 123669 / FGSC 9596 / NRRL 45880 / 77-13-4) (Fusarium solani subsp. pisi) protein is Nuclear distribution protein PAC1.